The chain runs to 168 residues: Alkyl hydroperoxide reductase C (168 aa).

Residues glutamate 1–tyrosine 138 form the Thioredoxin domain. The Cysteine sulfenic acid (-SOH) intermediate role is filled by cysteine 28.

Belongs to the peroxiredoxin family. AhpC/Prx1 subfamily. As to quaternary structure, homodimer; disulfide-linked, upon oxidation. 5 homodimers assemble to form a ring-like decamer.

It localises to the cytoplasm. The enzyme catalyses a hydroperoxide + NADH + H(+) = an alcohol + NAD(+) + H2O. Functionally, thiol-specific peroxidase that catalyzes the reduction of hydrogen peroxide and organic hydroperoxides to water and alcohols, respectively. Plays a role in cell protection against oxidative stress by detoxifying peroxides. The chain is Alkyl hydroperoxide reductase C from Ferdinandcohnia aciditolerans (strain JCM 32973 / CCTCC AB 2017280 / YN-1) (Bacillus aciditolerans).